Here is a 233-residue protein sequence, read N- to C-terminus: MALRTLASKNALSFALGGAARPSAASARGVTTVALPDLSYDFGALEPAISGEIMRLHHQKHHATYVGNYNKALEQLDAAVAKGDASAVVQLQGAIKFNGGGHVNHSIFWKNLKPISEGGGEPPHGKLGWAIDEDFGSFEALVKRMNAEGAALQGSGWVWLALDKEPKKLSVETTANQDPLVTKGASLVPLLGIDVWEHAYYLQYKNVRPDYLNNIWKVMNWKYAGEVYENVLA.

Residues 1 to 29 constitute a mitochondrion transit peptide; it reads MALRTLASKNALSFALGGAARPSAASARG. Residues His57, His105, Asp194, and His198 each coordinate Mn(2+).

The protein belongs to the iron/manganese superoxide dismutase family. Homotetramer. It depends on Mn(2+) as a cofactor.

The protein resides in the mitochondrion matrix. It catalyses the reaction 2 superoxide + 2 H(+) = H2O2 + O2. Its function is as follows. Destroys superoxide anion radicals which are normally produced within the cells and which are toxic to biological systems. This chain is Superoxide dismutase [Mn] 3.4, mitochondrial (SODA.3), found in Zea mays (Maize).